The following is a 71-amino-acid chain: DNA-directed RNA polymerase subunit 10-like protein (71 aa).

Zn(2+) is bound by residues C7, C10, C44, and C45.

This sequence belongs to the archaeal Rpo10/eukaryotic RPB10 RNA polymerase subunit family. Interacts with IYO.

Its subcellular location is the nucleus. The sequence is that of DNA-directed RNA polymerase subunit 10-like protein from Arabidopsis thaliana (Mouse-ear cress).